We begin with the raw amino-acid sequence, 631 residues long: Cyclic nucleotide-gated channel alpha-3 (631 aa).

The span at 1-18 (MAKVNTQCSQPSPTQLSI) shows a compositional bias: polar residues. Disordered regions lie at residues 1 to 21 (MAKVNTQCSQPSPTQLSIKNA) and 71 to 98 (EVSTRESNAQPNPGEQKPPDGGEGRKEE). Over 1–111 (MAKVNTQCSQ…VDPSSNIYYR (111 aa)) the chain is Cytoplasmic. Residues 87–98 (KPPDGGEGRKEE) show a composition bias toward basic and acidic residues. The helical transmembrane segment at 112-133 (WLTAIALPVFYNWCLLVCRACF) threads the bilayer. The Extracellular segment spans residues 134 to 139 (DELQSE). Residues 140 to 160 (HLTLWLVLDYSADVLYVLDML) form a helical membrane-spanning segment. Over 161 to 187 (VRARTGFLEQGLMVRDTKRLWKHYTKT) the chain is Cytoplasmic. A helical transmembrane segment spans residues 188-207 (LHFKLDILSLIPTDLAYLKL). Topologically, residues 208-211 (GVNY) are extracellular. A helical membrane pass occupies residues 212–229 (PELRFNRLLKFSRLFEFF). The Cytoplasmic portion of the chain corresponds to 230–239 (DRTETRTNYP). The tract at residues 239 to 347 (PNVFRIGNLV…GNVGSMISNM (109 aa)) is ion conduction pathway. Residues 240–262 (NVFRIGNLVLYTLIIIHWNACIY) form a helical membrane-spanning segment. The Extracellular segment spans residues 263–288 (FAISKFIGFGTDSWVYPNTSKPEYAR). Asparagine 280 carries N-linked (GalNAc...) asparagine glycosylation. Transmembrane regions (helical) follow at residues 289-319 (LSRKYIYSLYWSTLTLTTIGETPPPVKDEEY) and 320-344 (LFVVIDFLVGILIFATIVGNVGSMI). The tract at residues 306–309 (TIGE) is selectivity filter. At 345–631 (SNMNAPRVEF…ENSEDASKTD (287 aa)) the chain is on the cytoplasmic side. Positions 349–426 (APRVEFQAKI…TLKKVRIFQD (78 aa)) are C-linker. Positions 429–549 (AGLLVELVLK…EEKGRQILMK (121 aa)) are cyclic nucleotide-binding domain. 3',5'-cyclic GMP contacts are provided by glycine 489, glutamate 490, serine 492, arginine 505, threonine 506, and aspartate 550. Positions 567-610 (VEEKVEYLESSLDILQTRFARLLAEYSASQMKLKQRLTRLESQM) form a coiled coil.

This sequence belongs to the cyclic nucleotide-gated cation channel (TC 1.A.1.5) family. CNGA3 subfamily. Forms heterotetrameric channels composed of CNGA3 and CNGB3 subunits with 3:1 stoichiometry. In terms of tissue distribution, prominently expressed in retina.

Its subcellular location is the cell membrane. The catalysed reaction is Ca(2+)(in) = Ca(2+)(out). It catalyses the reaction Na(+)(in) = Na(+)(out). The enzyme catalyses K(+)(in) = K(+)(out). It carries out the reaction NH4(+)(in) = NH4(+)(out). The catalysed reaction is Rb(+)(in) = Rb(+)(out). It catalyses the reaction Li(+)(in) = Li(+)(out). The enzyme catalyses Cs(+)(in) = Cs(+)(out). Functionally, pore-forming subunit of the cone cyclic nucleotide-gated channel. Mediates cone photoresponses at bright light converting transient changes in intracellular cGMP levels into electrical signals. In the dark, cGMP levels are high and keep the channel open enabling a steady inward current carried by Na(+) and Ca(2+) ions that leads to membrane depolarization and neurotransmitter release from synaptic terminals. Upon photon absorption cGMP levels decline leading to channel closure and membrane hyperpolarization that ultimately slows neurotransmitter release and signals the presence of light, the end point of the phototransduction cascade. Pore-forming subunit of the gustatory cyclic nucleotide-gated channel. In the taste buds, may sense oral extracellular pH and conduct ion currents that modulate the excitability of taste cells. Conducts cGMP- and cAMP-gated ion currents, with permeability for monovalent and divalent cations. This is Cyclic nucleotide-gated channel alpha-3 from Mus musculus (Mouse).